Reading from the N-terminus, the 172-residue chain is Large ribosomal subunit protein uL10 (172 aa).

It belongs to the universal ribosomal protein uL10 family. Part of the ribosomal stalk of the 50S ribosomal subunit. The N-terminus interacts with L11 and the large rRNA to form the base of the stalk. The C-terminus forms an elongated spine to which L12 dimers bind in a sequential fashion forming a multimeric L10(L12)X complex.

In terms of biological role, forms part of the ribosomal stalk, playing a central role in the interaction of the ribosome with GTP-bound translation factors. This is Large ribosomal subunit protein uL10 from Chlorobium phaeovibrioides (strain DSM 265 / 1930) (Prosthecochloris vibrioformis (strain DSM 265)).